Consider the following 271-residue polypeptide: Transmembrane protein 33 homolog (271 aa).

Residues Met1–Pro32 form a disordered region. A compositionally biased stretch (low complexity) spans Ser13–Ser25. 3 helical membrane-spanning segments follow: residues Val56 to His76, Val125 to Ala145, and Ala180 to Phe200.

Belongs to the PER33/POM33 family.

It localises to the membrane. This Caenorhabditis elegans protein is Transmembrane protein 33 homolog.